The sequence spans 189 residues: Acireductone dioxygenase 1 (189 aa).

Residues His-102, His-104, Glu-108, and His-146 each coordinate Fe(2+). Residues His-102, His-104, Glu-108, and His-146 each contribute to the Ni(2+) site.

This sequence belongs to the acireductone dioxygenase (ARD) family. Monomer. Requires Fe(2+) as cofactor. The cofactor is Ni(2+).

The catalysed reaction is 1,2-dihydroxy-5-(methylsulfanyl)pent-1-en-3-one + O2 = 3-(methylsulfanyl)propanoate + CO + formate + 2 H(+). It carries out the reaction 1,2-dihydroxy-5-(methylsulfanyl)pent-1-en-3-one + O2 = 4-methylsulfanyl-2-oxobutanoate + formate + 2 H(+). Its pathway is amino-acid biosynthesis; L-methionine biosynthesis via salvage pathway; L-methionine from S-methyl-5-thio-alpha-D-ribose 1-phosphate: step 5/6. Functionally, catalyzes 2 different reactions between oxygen and the acireductone 1,2-dihydroxy-3-keto-5-methylthiopentene (DHK-MTPene) depending upon the metal bound in the active site. Fe-containing acireductone dioxygenase (Fe-ARD) produces formate and 2-keto-4-methylthiobutyrate (KMTB), the alpha-ketoacid precursor of methionine in the methionine recycle pathway. Ni-containing acireductone dioxygenase (Ni-ARD) produces methylthiopropionate, carbon monoxide and formate, and does not lie on the methionine recycle pathway. The chain is Acireductone dioxygenase 1 from Nocardia farcinica (strain IFM 10152).